Reading from the N-terminus, the 318-residue chain is Protein-methionine-sulfoxide reductase catalytic subunit MsrP (318 aa).

Positions 1 to 40 (MNRFTRYDVTPEVIFNQRRQIIKAMGLGAAALSLPNIGFA) form a signal peptide, tat-type signal. Mo-molybdopterin contacts are provided by residues N72, 75 to 76 (YE), C130, T165, N217, R222, and 233 to 235 (SIK).

Belongs to the MsrP family. As to quaternary structure, heterodimer of a catalytic subunit (MsrP) and a heme-binding subunit (MsrQ). The cofactor is Mo-molybdopterin. Predicted to be exported by the Tat system. The position of the signal peptide cleavage has not been experimentally proven.

It localises to the periplasm. The catalysed reaction is L-methionyl-[protein] + a quinone + H2O = L-methionyl-(S)-S-oxide-[protein] + a quinol. It catalyses the reaction L-methionyl-[protein] + a quinone + H2O = L-methionyl-(R)-S-oxide-[protein] + a quinol. In terms of biological role, part of the MsrPQ system that repairs oxidized periplasmic proteins containing methionine sulfoxide residues (Met-O), using respiratory chain electrons. Thus protects these proteins from oxidative-stress damage caused by reactive species of oxygen and chlorine generated by the host defense mechanisms. MsrPQ is essential for the maintenance of envelope integrity under bleach stress, rescuing a wide series of structurally unrelated periplasmic proteins from methionine oxidation. The catalytic subunit MsrP is non-stereospecific, being able to reduce both (R-) and (S-) diastereoisomers of methionine sulfoxide. This Actinobacillus pleuropneumoniae serotype 3 (strain JL03) protein is Protein-methionine-sulfoxide reductase catalytic subunit MsrP.